A 97-amino-acid chain; its full sequence is Cobalt transport protein CbiN (97 aa).

A run of 2 helical transmembrane segments spans residues 6–26 and 68–88; these read VLMI…YSGL and SLLF…FFGY.

This sequence belongs to the CbiN family. In terms of assembly, forms an energy-coupling factor (ECF) transporter complex composed of an ATP-binding protein (A component, CbiO), a transmembrane protein (T component, CbiQ) and 2 possible substrate-capture proteins (S components, CbiM and CbiN) of unknown stoichimetry.

It is found in the cell membrane. It participates in cofactor biosynthesis; adenosylcobalamin biosynthesis. In terms of biological role, part of the energy-coupling factor (ECF) transporter complex CbiMNOQ involved in cobalt import. This chain is Cobalt transport protein CbiN, found in Methanococcus maripaludis (strain C6 / ATCC BAA-1332).